A 678-amino-acid chain; its full sequence is NADPH--cytochrome P450 reductase (678 aa).

The residue at position 2 (G2) is an N-acetylglycine. Over 2–22 the chain is Lumenal; the sequence is GDSNVDTGTTTSEMVAEEVSL. The helical transmembrane segment at 23–43 threads the bilayer; the sequence is FSATDMVLFSLIVGLLTYWFI. At 44–678 the chain is on the cytoplasmic side; sequence FRKKKDEVPE…KGRYSLDVWS (635 aa). S63 bears the Phosphoserine mark. Positions 80–224 constitute a Flavodoxin-like domain; sequence IIVFYGSQTG…DFITWREQFW (145 aa). Residues 86–91, 138–141, 173–182, and D208 each bind FMN; these read SQTGTA, ATYG, and LGNKTYEHFN. The 243-residue stretch at 279-521 folds into the FAD-binding FR-type domain; the sequence is KNPFLAVVTT…FVRKSQFRLP (243 aa). R298 is a binding site for NADP(+). Residues R424, 454-457, 472-474, Y478, and 488-491 contribute to the FAD site; these read RYYS, CAV, and GVAT. NADP(+) is bound by residues T535, 596–597, 602–606, and D639; these read SR and KVYVQ. Residue W677 coordinates FAD.

It belongs to the NADPH--cytochrome P450 reductase family. The protein in the N-terminal section; belongs to the flavodoxin family. In the C-terminal section; belongs to the flavoprotein pyridine nucleotide cytochrome reductase family. FAD serves as cofactor. FMN is required as a cofactor.

The protein resides in the endoplasmic reticulum membrane. The enzyme catalyses 2 oxidized [cytochrome P450] + NADPH = 2 reduced [cytochrome P450] + NADP(+) + H(+). Its function is as follows. This enzyme is required for electron transfer from NADP to cytochrome P450 in microsomes. It can also provide electron transfer to heme oxygenase and cytochrome B5. This is NADPH--cytochrome P450 reductase from Sus scrofa (Pig).